The sequence spans 92 residues: Large ribosomal subunit protein bL34m (92 aa).

Residues 1-46 (MAFLARCFGCQACRSVALLSGRYLQSRVWMGLPDSWPLLSLQQARG) constitute a mitochondrion transit peptide. A Phosphoserine modification is found at S71.

The protein belongs to the bacterial ribosomal protein bL34 family. In terms of assembly, component of the mitochondrial ribosome large subunit (39S) which comprises a 16S rRNA and about 50 distinct proteins.

The protein resides in the mitochondrion. The sequence is that of Large ribosomal subunit protein bL34m (Mrpl34) from Mus musculus (Mouse).